We begin with the raw amino-acid sequence, 362 residues long: E3 ubiquitin-protein ligase rififylin (362 aa).

A disordered region spans residues 17 to 37; sequence ETPPPQGARTQAYSNPGYSSF. The span at 24–37 shows a compositional bias: polar residues; the sequence is ARTQAYSNPGYSSF. An FYVE-type zinc finger spans residues 41–93; sequence TGSEPSCKACGVHFASTTRKQTCLDCKKNFCMTCSSQEGNGPRLCLLCLRFRA. The SAP 1 domain occupies 101–120; it reads LMKMKVKDLRDYLSLHDIST. The interval 162-183 is disordered; it reads LTQPQSSTVPPTSPGLPSSPAQ. Ser225, Ser228, Ser231, and Ser239 each carry phosphoserine. The region spanning 249–263 is the SAP 2 domain; that stretch reads IEGLTVRQLKEILAR. The RING-type zinc finger occupies 315-350; the sequence is CKICMDSPIDCVLLECGHMVTCTKCGKRMNECPICR.

In terms of assembly, interacts with CASP8 and CASP10. Interacts with RIPK1 (via protein kinase domain); involved in RIPK1 ubiquitination. Interacts with PRR5L. Interacts (via RING-type zinc finger) with p53/TP53; involved in p53/TP53 ubiquitination. Interacts (via RING-type zinc finger) with MDM2; the interaction stabilizes MDM2. Autoubiquitinated. Post-translationally, palmitoylated. In terms of processing, undergoes caspase-mediated cleavage upon death-receptor activation, by TNFSF10 for instance. May be mediated by the caspases CASP8 and CASP10 in a negative feedback loop. Ubiquitous. Detected in cerebrum, cerebellum, midbrain, brain stem, hippocampus, striatum, liver, heart, lung, kidney, muscle, spleen and testis.

Its subcellular location is the cytoplasm. It is found in the cytosol. It localises to the cell membrane. The protein localises to the recycling endosome membrane. It catalyses the reaction S-ubiquitinyl-[E2 ubiquitin-conjugating enzyme]-L-cysteine + [acceptor protein]-L-lysine = [E2 ubiquitin-conjugating enzyme]-L-cysteine + N(6)-ubiquitinyl-[acceptor protein]-L-lysine.. The protein operates within protein modification; protein ubiquitination. In terms of biological role, E3 ubiquitin-protein ligase that regulates several biological processes through the ubiquitin-mediated proteasomal degradation of various target proteins. Mediates 'Lys-48'-linked polyubiquitination of PRR5L and its subsequent proteasomal degradation thereby indirectly regulating cell migration through the mTORC2 complex. Also ubiquitinates the caspases CASP8 and CASP10, promoting their proteasomal degradation, to negatively regulate apoptosis downstream of death domain receptors. Also negatively regulates the tumor necrosis factor-mediated signaling pathway through targeting of RIPK1 to ubiquitin-mediated proteasomal degradation. Negatively regulates p53/TP53 through its direct ubiquitination and targeting to proteasomal degradation. Indirectly, may also negatively regulate p53/TP53 through ubiquitination and degradation of SFN. May also play a role in endocytic recycling. This Rattus norvegicus (Rat) protein is E3 ubiquitin-protein ligase rififylin.